A 453-amino-acid polypeptide reads, in one-letter code: UDP-N-acetylmuramoylalanine--D-glutamate ligase (453 aa).

115 to 121 (GSNGKTT) provides a ligand contact to ATP.

It belongs to the MurCDEF family.

It localises to the cytoplasm. The catalysed reaction is UDP-N-acetyl-alpha-D-muramoyl-L-alanine + D-glutamate + ATP = UDP-N-acetyl-alpha-D-muramoyl-L-alanyl-D-glutamate + ADP + phosphate + H(+). The protein operates within cell wall biogenesis; peptidoglycan biosynthesis. Cell wall formation. Catalyzes the addition of glutamate to the nucleotide precursor UDP-N-acetylmuramoyl-L-alanine (UMA). The chain is UDP-N-acetylmuramoylalanine--D-glutamate ligase from Koribacter versatilis (strain Ellin345).